The primary structure comprises 109 residues: Large ribosomal subunit protein eL30 (109 aa).

The protein belongs to the eukaryotic ribosomal protein eL30 family.

The sequence is that of Large ribosomal subunit protein eL30 (RPL30) from Yarrowia lipolytica (strain CLIB 122 / E 150) (Yeast).